A 152-amino-acid polypeptide reads, in one-letter code: Aspartate carbamoyltransferase regulatory chain (152 aa).

Residues cysteine 109, cysteine 114, cysteine 138, and cysteine 141 each contribute to the Zn(2+) site.

This sequence belongs to the PyrI family. As to quaternary structure, contains catalytic and regulatory chains. Zn(2+) is required as a cofactor.

Its function is as follows. Involved in allosteric regulation of aspartate carbamoyltransferase. This is Aspartate carbamoyltransferase regulatory chain from Proteus mirabilis (strain HI4320).